The chain runs to 77 residues: MIYKVFYQETKERSPRRETTRALYLDIDTSSELEGRITARQLVEENRPEYNIEYIELLSDKLLDYEKETGAFEITEF.

This sequence belongs to the RNA polymerase subunit epsilon family. RNAP is composed of a core of 2 alpha, a beta and a beta' subunit. The core is associated with a delta subunit, and at least one of epsilon or omega. When a sigma factor is associated with the core the holoenzyme is formed, which can initiate transcription.

The enzyme catalyses RNA(n) + a ribonucleoside 5'-triphosphate = RNA(n+1) + diphosphate. A non-essential component of RNA polymerase (RNAP). This Streptococcus pneumoniae (strain Hungary19A-6) protein is DNA-directed RNA polymerase subunit epsilon.